The following is a 581-amino-acid chain: Cytosolic Fe-S cluster assembly factor nar-1 (581 aa).

8 residues coordinate [4Fe-4S] cluster: C20, C68, C71, C74, C215, C270, C457, and C461.

The protein belongs to the NARF family.

Component of the cytosolic Fe/S protein assembly machinery. Required for maturation of extramitochondrial Fe/S proteins. May play a role in the transfer of pre-assembled Fe/S clusters to target apoproteins. This chain is Cytosolic Fe-S cluster assembly factor nar-1 (nar-1), found in Neurospora crassa (strain ATCC 24698 / 74-OR23-1A / CBS 708.71 / DSM 1257 / FGSC 987).